The following is a 457-amino-acid chain: Argininosuccinate lyase (457 aa).

It belongs to the lyase 1 family. Argininosuccinate lyase subfamily.

The protein localises to the cytoplasm. It carries out the reaction 2-(N(omega)-L-arginino)succinate = fumarate + L-arginine. It functions in the pathway amino-acid biosynthesis; L-arginine biosynthesis; L-arginine from L-ornithine and carbamoyl phosphate: step 3/3. This is Argininosuccinate lyase from Haemophilus influenzae (strain 86-028NP).